A 380-amino-acid chain; its full sequence is Chaperone protein DnaJ (380 aa).

Residues 5–70 (DFYEVLGVSR…QKRAAYDQYG (66 aa)) form the J domain. The CR-type zinc finger occupies 135–213 (GCEKDIEIPT…CHGDGRVQKT (79 aa)). Residues Cys-148, Cys-151, Cys-165, Cys-168, Cys-187, Cys-190, Cys-201, and Cys-204 each coordinate Zn(2+). CXXCXGXG motif repeat units follow at residues 148 to 155 (CEPCDGTG), 165 to 172 (CSTCHGQG), 187 to 194 (CPTCHGKG), and 201 to 208 (CNSCHGDG).

The protein belongs to the DnaJ family. Homodimer. Requires Zn(2+) as cofactor.

The protein resides in the cytoplasm. Its function is as follows. Participates actively in the response to hyperosmotic and heat shock by preventing the aggregation of stress-denatured proteins and by disaggregating proteins, also in an autonomous, DnaK-independent fashion. Unfolded proteins bind initially to DnaJ; upon interaction with the DnaJ-bound protein, DnaK hydrolyzes its bound ATP, resulting in the formation of a stable complex. GrpE releases ADP from DnaK; ATP binding to DnaK triggers the release of the substrate protein, thus completing the reaction cycle. Several rounds of ATP-dependent interactions between DnaJ, DnaK and GrpE are required for fully efficient folding. Also involved, together with DnaK and GrpE, in the DNA replication of plasmids through activation of initiation proteins. The polypeptide is Chaperone protein DnaJ (Aliivibrio salmonicida (strain LFI1238) (Vibrio salmonicida (strain LFI1238))).